A 299-amino-acid chain; its full sequence is GTPase Era (299 aa).

Positions 5 to 175 (RSGFVCFVGR…TDVLAGKLPP (171 aa)) constitute an Era-type G domain. Residues 13–20 (GRPNTGKS) are G1. Residue 13-20 (GRPNTGKS) participates in GTP binding. The tract at residues 39–43 (QTTRH) is G2. Residues 60 to 63 (DTPG) form a G3 region. GTP-binding positions include 60-64 (DTPGL) and 124-127 (TKID). The interval 124–127 (TKID) is G4. A G5 region spans residues 154-156 (VSA). The KH type-2 domain maps to 206–285 (VRDELPHSLA…YLDLRVKIAK (80 aa)).

This sequence belongs to the TRAFAC class TrmE-Era-EngA-EngB-Septin-like GTPase superfamily. Era GTPase family. In terms of assembly, monomer.

It localises to the cell envelope. It is found in the secreted. The protein resides in the cell wall. Functionally, exhibits GTPase activity. Binds RNA but is probably not involved in ribosome assembly in mycobacteria. This Mycobacterium sp. (strain KMS) protein is GTPase Era.